The sequence spans 396 residues: Purine ribonucleoside efflux pump NepI (396 aa).

The Cytoplasmic portion of the chain corresponds to M1–A21. The helical transmembrane segment at V22–L42 threads the bilayer. The Periplasmic portion of the chain corresponds to L43–E54. A helical transmembrane segment spans residues G55–I75. Residues T76–R85 lie on the Cytoplasmic side of the membrane. A helical membrane pass occupies residues Y86 to N106. S107 is a topological domain (periplasmic). The chain crosses the membrane as a helical span at residues F108–I128. Over S129–S147 the chain is Cytoplasmic. A helical membrane pass occupies residues V148–G168. Residues E169 to N175 lie on the Periplasmic side of the membrane. The helical transmembrane segment at V176 to P196 threads the bilayer. Topologically, residues S197–R215 are cytoplasmic. Residues P216–F236 traverse the membrane as a helical segment. Residues T237–T255 are Periplasmic-facing. Residues L256–L276 traverse the membrane as a helical segment. Residues K277 to K281 lie on the Cytoplasmic side of the membrane. The chain crosses the membrane as a helical span at residues L282 to G302. The Periplasmic segment spans residues S303–K305. The helical transmembrane segment at I306–W326 threads the bilayer. Topologically, residues S327–S343 are cytoplasmic. A helical transmembrane segment spans residues I344 to L364. The Periplasmic portion of the chain corresponds to D365–N366. The chain crosses the membrane as a helical span at residues I367 to V387. Residues T388–S396 lie on the Cytoplasmic side of the membrane.

Belongs to the major facilitator superfamily. DHA1 family. NepI (TC 2.A.1.2.26) subfamily.

The protein localises to the cell inner membrane. The catalysed reaction is inosine(in) + H(+)(out) = inosine(out) + H(+)(in). It catalyses the reaction guanosine(in) + H(+)(out) = guanosine(out) + H(+)(in). Functionally, involved in the efflux of purine ribonucleosides, such as inosine and guanosine. The polypeptide is Purine ribonucleoside efflux pump NepI (Escherichia coli O127:H6 (strain E2348/69 / EPEC)).